Reading from the N-terminus, the 208-residue chain is Ypt/Rab-type GTPase YPT7 (208 aa).

GTP is bound by residues 17-23, 33-40, Gly-67, and 126-129; these read SGVGKTS, YSQQYKAT, and NKID. Positions 37 to 45 match the Effector region motif; that stretch reads YKATIGADF. Residue Lys-147 forms a Glycyl lysine isopeptide (Lys-Gly) (interchain with G-Cter in ubiquitin) linkage. Position 158 to 160 (158 to 160) interacts with GTP; that stretch reads SAK. 2 S-geranylgeranyl cysteine lipidation sites follow: Cys-206 and Cys-208. Cys-208 bears the Cysteine methyl ester mark.

This sequence belongs to the small GTPase superfamily. Rab family. In terms of assembly, interacts with IVY1. Interacts with YIF1, YIP4 and YIP5. Interacts with the HOPS complex. Interacts with the class C-Vps complex. Interacts with VPS35. Interacts with VPS39. Interacts with the GDP dissociation inhibitor GDI1. Interacts with CCZ1.

The protein resides in the late endosome. It is found in the vacuole membrane. Its activity is regulated as follows. Rab activation is generally mediated by a guanine exchange factor (GEF), while inactivation through hydrolysis of bound GTP is catalyzed by a GTPase activating protein (GAP). YPT7 is activated by GEFs MON1-CCZ1 complex (MC1) and VAM6/VPS39, and inactivated by GAPs GYP7 and GYP1. Ypt/Rab-type GTPases are key regulators of membrane trafficking and intracellular vesicular transport. They act as molecular switches that convert between GTP-bound and GDP-bound states, and regulate virtually all steps of membrane traffic from the formation of the transport vesicle at the donor membrane to its fusion at the target membrane. In the GDP-bound state, Ypt proteins are predominantly cytosolic, solubilized through the interaction with a GDP dissociation inhibitor (GDI). In the GTP-bound state, the proteins are membrane bound and interact with specific effector proteins that select cargo, promote vesicle movement, or verify the correct site of fusion. Involved in regulation of vesicular protein transport in exo- and endocytosis. Involved in regulation of late endosome to vacuole trafficking and homotypic vacuole fusion, by interacting in its GTP-bound state on the donor membrane with the large multiprotein HOPS/class C-Vps tethering complex on the acceptor membrane. Involved in retromer assembly and cargo export, recognizing the cargo selection complex (CSC). GTP-bound YPT7 recruits CSC to vacuolar membranes via retromer subunit VPS35. Interacts with the HOPS complex subunit VPS39 independent of the HOPS complex at mitochondria-vacuole contact sites (vCLAMPs), providing a physical and metabolic interconnection between the endocytic pathway and mitochondria. This is Ypt/Rab-type GTPase YPT7 (YPT7) from Saccharomyces cerevisiae (strain ATCC 204508 / S288c) (Baker's yeast).